A 514-amino-acid chain; its full sequence is 2-isopropylmalate synthase (514 aa).

Positions 5–268 constitute a Pyruvate carboxyltransferase domain; it reads LIIFDTTLRD…DVGIDTSQIV (264 aa). Mn(2+)-binding residues include aspartate 14, histidine 202, histidine 204, and asparagine 239. The tract at residues 395 to 514 is regulatory domain; that stretch reads KFVSLSQRSE…KDDKVNPQRS (120 aa).

It belongs to the alpha-IPM synthase/homocitrate synthase family. LeuA type 1 subfamily. In terms of assembly, homodimer. Mn(2+) serves as cofactor.

It localises to the cytoplasm. The enzyme catalyses 3-methyl-2-oxobutanoate + acetyl-CoA + H2O = (2S)-2-isopropylmalate + CoA + H(+). It participates in amino-acid biosynthesis; L-leucine biosynthesis; L-leucine from 3-methyl-2-oxobutanoate: step 1/4. Its function is as follows. Catalyzes the condensation of the acetyl group of acetyl-CoA with 3-methyl-2-oxobutanoate (2-ketoisovalerate) to form 3-carboxy-3-hydroxy-4-methylpentanoate (2-isopropylmalate). The sequence is that of 2-isopropylmalate synthase from Burkholderia cenocepacia (strain ATCC BAA-245 / DSM 16553 / LMG 16656 / NCTC 13227 / J2315 / CF5610) (Burkholderia cepacia (strain J2315)).